Reading from the N-terminus, the 280-residue chain is Phosphatidylglycerol--prolipoprotein diacylglyceryl transferase (280 aa).

Transmembrane regions (helical) follow at residues 23–43 (LRWY…LAGV), 58–78 (LLFW…VLFY), 93–113 (IWTG…ALWW), and 120–140 (CTFL…LGAG). An a 1,2-diacyl-sn-glycero-3-phospho-(1'-sn-glycerol)-binding site is contributed by Arg-141. 3 helical membrane passes run 173–193 (PSQL…LWLY), 200–220 (IGAV…FVEF), and 241–261 (QGQI…VWAV).

This sequence belongs to the Lgt family.

Its subcellular location is the cell inner membrane. It carries out the reaction L-cysteinyl-[prolipoprotein] + a 1,2-diacyl-sn-glycero-3-phospho-(1'-sn-glycerol) = an S-1,2-diacyl-sn-glyceryl-L-cysteinyl-[prolipoprotein] + sn-glycerol 1-phosphate + H(+). It participates in protein modification; lipoprotein biosynthesis (diacylglyceryl transfer). In terms of biological role, catalyzes the transfer of the diacylglyceryl group from phosphatidylglycerol to the sulfhydryl group of the N-terminal cysteine of a prolipoprotein, the first step in the formation of mature lipoproteins. This is Phosphatidylglycerol--prolipoprotein diacylglyceryl transferase from Pseudoalteromonas atlantica (strain T6c / ATCC BAA-1087).